The primary structure comprises 317 residues: Protoheme IX farnesyltransferase (317 aa).

Helical transmembrane passes span P43–T63, P65–A85, A119–P139, I140–L160, I168–G188, V195–F215, L238–V258, W261–V281, and A292–V312.

The protein belongs to the UbiA prenyltransferase family. Protoheme IX farnesyltransferase subfamily. As to quaternary structure, interacts with CtaA.

Its subcellular location is the cell membrane. The enzyme catalyses heme b + (2E,6E)-farnesyl diphosphate + H2O = Fe(II)-heme o + diphosphate. It functions in the pathway porphyrin-containing compound metabolism; heme O biosynthesis; heme O from protoheme: step 1/1. Converts heme B (protoheme IX) to heme O by substitution of the vinyl group on carbon 2 of heme B porphyrin ring with a hydroxyethyl farnesyl side group. The polypeptide is Protoheme IX farnesyltransferase (Desulforudis audaxviator (strain MP104C)).